Here is a 295-residue protein sequence, read N- to C-terminus: 33 kDa chaperonin (295 aa).

Disulfide bonds link C233–C235 and C267–C270.

It belongs to the HSP33 family. In terms of processing, under oxidizing conditions two disulfide bonds are formed involving the reactive cysteines. Under reducing conditions zinc is bound to the reactive cysteines and the protein is inactive.

It is found in the cytoplasm. Redox regulated molecular chaperone. Protects both thermally unfolding and oxidatively damaged proteins from irreversible aggregation. Plays an important role in the bacterial defense system toward oxidative stress. The chain is 33 kDa chaperonin from Mannheimia succiniciproducens (strain KCTC 0769BP / MBEL55E).